Reading from the N-terminus, the 526-residue chain is Probable feruloyl esterase B-1 (526 aa).

Positions 1–19 are cleaved as a signal peptide; sequence MPSLRRLLPFLAAGSAALA. 2 disulfides stabilise this stretch: cysteine 28–cysteine 75 and cysteine 63–cysteine 114. N-linked (GlcNAc...) asparagine glycans are attached at residues asparagine 53, asparagine 85, asparagine 98, and asparagine 138. 3 cysteine pairs are disulfide-bonded: cysteine 187/cysteine 441, cysteine 256/cysteine 273, and cysteine 282/cysteine 291. The Acyl-ester intermediate role is filled by serine 188. The N-linked (GlcNAc...) asparagine glycan is linked to asparagine 246. Positions 257, 260, 262, 264, and 266 each coordinate Ca(2+). 2 N-linked (GlcNAc...) asparagine glycosylation sites follow: asparagine 287 and asparagine 311. Active-site charge relay system residues include aspartate 400 and histidine 440. N-linked (GlcNAc...) asparagine glycosylation is found at asparagine 490 and asparagine 516. Cysteine 503 and cysteine 525 are joined by a disulfide.

The protein belongs to the tannase family.

The protein localises to the secreted. It catalyses the reaction feruloyl-polysaccharide + H2O = ferulate + polysaccharide.. In terms of biological role, involved in degradation of plant cell walls. Hydrolyzes the feruloyl-arabinose ester bond in arabinoxylans as well as the feruloyl-galactose and feruloyl-arabinose ester bonds in pectin. This is Probable feruloyl esterase B-1 (faeB-1) from Aspergillus flavus (strain ATCC 200026 / FGSC A1120 / IAM 13836 / NRRL 3357 / JCM 12722 / SRRC 167).